A 937-amino-acid chain; its full sequence is Protein translocase subunit SecA (937 aa).

ATP-binding positions include Gln-87, Gly-105–Thr-109, and Asp-494. The tract at residues Arg-881–His-937 is disordered. 2 stretches are compositionally biased toward basic and acidic residues: residues Glu-890 to Ala-900 and Thr-913 to Gly-927. Residues Lys-928 to His-937 show a composition bias toward basic residues.

It belongs to the SecA family. In terms of assembly, monomer and homodimer. Part of the essential Sec protein translocation apparatus which comprises SecA, SecYEG and auxiliary proteins SecDF. Other proteins may also be involved.

It localises to the cell membrane. The protein localises to the cytoplasm. The catalysed reaction is ATP + H2O + cellular proteinSide 1 = ADP + phosphate + cellular proteinSide 2.. Part of the Sec protein translocase complex. Interacts with the SecYEG preprotein conducting channel. Has a central role in coupling the hydrolysis of ATP to the transfer of proteins into and across the cell membrane, serving as an ATP-driven molecular motor driving the stepwise translocation of polypeptide chains across the membrane. This is Protein translocase subunit SecA from Nocardia farcinica (strain IFM 10152).